Here is a 227-residue protein sequence, read N- to C-terminus: Uracil-DNA glycosylase (227 aa).

Catalysis depends on D68, which acts as the Proton acceptor.

Belongs to the uracil-DNA glycosylase (UDG) superfamily. UNG family.

The protein resides in the cytoplasm. It carries out the reaction Hydrolyzes single-stranded DNA or mismatched double-stranded DNA and polynucleotides, releasing free uracil.. Functionally, excises uracil residues from the DNA which can arise as a result of misincorporation of dUMP residues by DNA polymerase or due to deamination of cytosine. This is Uracil-DNA glycosylase from Mycolicibacterium paratuberculosis (strain ATCC BAA-968 / K-10) (Mycobacterium paratuberculosis).